The following is a 161-amino-acid chain: Large ribosomal subunit protein bL17 (161 aa).

A disordered region spans residues K126–E161. The span at K129–K138 shows a compositional bias: basic residues. Residues E142–T152 are compositionally biased toward low complexity.

It belongs to the bacterial ribosomal protein bL17 family. As to quaternary structure, part of the 50S ribosomal subunit. Contacts protein L32.

In Bacteroides fragilis (strain ATCC 25285 / DSM 2151 / CCUG 4856 / JCM 11019 / LMG 10263 / NCTC 9343 / Onslow / VPI 2553 / EN-2), this protein is Large ribosomal subunit protein bL17.